Consider the following 519-residue polypeptide: Xylose import ATP-binding protein XylG (519 aa).

2 consecutive ABC transporter domains span residues 6 to 245 (LTMR…VGRE) and 262 to 507 (LDVR…LKPA). 38–45 (GENGAGKS) is a binding site for ATP.

The protein belongs to the ABC transporter superfamily. Xylose importer (TC 3.A.1.2.4) family. As to quaternary structure, the complex is composed of two ATP-binding proteins (XylG), two transmembrane proteins (XylH) and a solute-binding protein (XylF).

Its subcellular location is the cell inner membrane. It catalyses the reaction D-xylose(out) + ATP + H2O = D-xylose(in) + ADP + phosphate + H(+). Part of the ABC transporter complex XylFGH involved in xylose import. Responsible for energy coupling to the transport system. The protein is Xylose import ATP-binding protein XylG of Burkholderia cenocepacia (strain HI2424).